Reading from the N-terminus, the 469-residue chain is Trigger factor (469 aa).

The PPIase FKBP-type domain maps to 165-250 (GDCVTIDYLG…VKAISKPDEL (86 aa)). Residues 439–460 (EYDESDLTEKKPEKKKGVEKTP) are compositionally biased toward basic and acidic residues. The disordered stretch occupies residues 439 to 469 (EYDESDLTEKKPEKKKGVEKTPIRKKAPKKG).

Belongs to the FKBP-type PPIase family. Tig subfamily.

It localises to the cytoplasm. It carries out the reaction [protein]-peptidylproline (omega=180) = [protein]-peptidylproline (omega=0). Functionally, involved in protein export. Acts as a chaperone by maintaining the newly synthesized protein in an open conformation. Functions as a peptidyl-prolyl cis-trans isomerase. The chain is Trigger factor from Bartonella quintana (strain Toulouse) (Rochalimaea quintana).